The sequence spans 348 residues: Holliday junction branch migration complex subunit RuvB (348 aa).

The interval 4–186 is large ATPase domain (RuvB-L); the sequence is TDRIISANTA…FGIIQRLEFY (183 aa). ATP-binding positions include isoleucine 25, arginine 26, glycine 67, lysine 70, threonine 71, threonine 72, 133-135, arginine 176, tyrosine 186, and arginine 223; that span reads EDY. Threonine 71 lines the Mg(2+) pocket. The interval 187 to 257 is small ATPAse domain (RuvB-S); it reads SIDDLSKIVY…IADKALSMLK (71 aa). Residues 260–348 are head domain (RuvB-H); that stretch reads PVGFDHMDHR…SADQQQTLSI (89 aa). DNA contacts are provided by arginine 315 and arginine 320.

The protein belongs to the RuvB family. Homohexamer. Forms an RuvA(8)-RuvB(12)-Holliday junction (HJ) complex. HJ DNA is sandwiched between 2 RuvA tetramers; dsDNA enters through RuvA and exits via RuvB. An RuvB hexamer assembles on each DNA strand where it exits the tetramer. Each RuvB hexamer is contacted by two RuvA subunits (via domain III) on 2 adjacent RuvB subunits; this complex drives branch migration. In the full resolvosome a probable DNA-RuvA(4)-RuvB(12)-RuvC(2) complex forms which resolves the HJ.

It is found in the cytoplasm. The enzyme catalyses ATP + H2O = ADP + phosphate + H(+). The RuvA-RuvB-RuvC complex processes Holliday junction (HJ) DNA during genetic recombination and DNA repair, while the RuvA-RuvB complex plays an important role in the rescue of blocked DNA replication forks via replication fork reversal (RFR). RuvA specifically binds to HJ cruciform DNA, conferring on it an open structure. The RuvB hexamer acts as an ATP-dependent pump, pulling dsDNA into and through the RuvAB complex. RuvB forms 2 homohexamers on either side of HJ DNA bound by 1 or 2 RuvA tetramers; 4 subunits per hexamer contact DNA at a time. Coordinated motions by a converter formed by DNA-disengaged RuvB subunits stimulates ATP hydrolysis and nucleotide exchange. Immobilization of the converter enables RuvB to convert the ATP-contained energy into a lever motion, pulling 2 nucleotides of DNA out of the RuvA tetramer per ATP hydrolyzed, thus driving DNA branch migration. The RuvB motors rotate together with the DNA substrate, which together with the progressing nucleotide cycle form the mechanistic basis for DNA recombination by continuous HJ branch migration. Branch migration allows RuvC to scan DNA until it finds its consensus sequence, where it cleaves and resolves cruciform DNA. The polypeptide is Holliday junction branch migration complex subunit RuvB (Francisella tularensis subsp. tularensis (strain FSC 198)).